Reading from the N-terminus, the 206-residue chain is Small ribosomal subunit protein uS4 (206 aa).

In terms of domain architecture, S4 RNA-binding spans 96 to 156; the sequence is GRLDNVVYRM…EKAKKQSRVK (61 aa).

It belongs to the universal ribosomal protein uS4 family. In terms of assembly, part of the 30S ribosomal subunit. Contacts protein S5. The interaction surface between S4 and S5 is involved in control of translational fidelity.

Its function is as follows. One of the primary rRNA binding proteins, it binds directly to 16S rRNA where it nucleates assembly of the body of the 30S subunit. With S5 and S12 plays an important role in translational accuracy. This is Small ribosomal subunit protein uS4 from Erwinia tasmaniensis (strain DSM 17950 / CFBP 7177 / CIP 109463 / NCPPB 4357 / Et1/99).